The sequence spans 822 residues: uncharacterized protein (822 aa).

The Cytoplasmic portion of the chain corresponds to Met-1–Gly-13. A helical transmembrane segment spans residues Phe-14 to Ala-34. At Leu-35 to Ala-44 the chain is on the extracellular side. Residues Val-45 to Ile-65 traverse the membrane as a helical segment. The Cytoplasmic segment spans residues Thr-66–His-76. A helical membrane pass occupies residues Ile-77–Val-97. The Extracellular segment spans residues Asp-98–Thr-120. Residues Thr-121–Leu-141 form a helical membrane-spanning segment. Residues Lys-142 to Lys-822 are Cytoplasmic-facing. Residues Arg-271–Ser-290 are disordered. Ser-690 carries the post-translational modification Phosphoserine. The span at Thr-698–Asn-712 shows a compositional bias: polar residues. Disordered stretches follow at residues Thr-698–Asn-728 and Asn-751–Glu-783. Low complexity predominate over residues Gln-761 to Gly-776.

The protein localises to the membrane. This is an uncharacterized protein from Saccharomyces cerevisiae (strain ATCC 204508 / S288c) (Baker's yeast).